Consider the following 252-residue polypeptide: uncharacterized protein (252 aa).

Belongs to the methyltransferase superfamily.

This is an uncharacterized protein from Mycobacterium sp. (strain KMS).